Consider the following 167-residue polypeptide: Sporulation membrane protein YtrI (167 aa).

Residues 15–35 form a helical membrane-spanning segment; sequence FFAGMMCGAVISWFFFLFTYG.

The protein resides in the cell membrane. Involved in sporulation. The chain is Sporulation membrane protein YtrI (ytrI) from Bacillus subtilis (strain 168).